The following is an 818-amino-acid chain: Protocadherin beta-1 (818 aa).

An N-terminal signal peptide occupies residues 1–28; that stretch reads MAGTRRKSLQNRQVGSLLIFLCISVGDA. The Extracellular portion of the chain corresponds to 29-691; sequence TTIRYSVAEE…RKVNPSTKYL (663 aa). 5 Cadherin domains span residues 35–133, 138–242, 243–347, 348–452, and 457–562; these read VAEE…APVF, PLLK…VPQF, SRLV…PPEV, MVSS…PPIF, and YILT…RPMI. N169, N209, N257, and N419 each carry an N-linked (GlcNAc...) asparagine glycan. The N-linked (GlcNAc...) asparagine glycan is linked to N568. Residues 577–672 enclose the Cadherin 6 domain; that stretch reads VPRSAEAGYL…LVDGFSEPYL (96 aa). A helical transmembrane segment spans residues 692 to 712; sequence VISLVILSFLFLLSVIVIFII. The Cytoplasmic portion of the chain corresponds to 713–818; it reads HVYQKIKYRE…GHDQVSDDYM (106 aa). The tract at residues 789–818 is disordered; the sequence is MEAGSSLPPNSDRNKSQRLEGHDQVSDDYM. Over residues 800-818 the composition is skewed to basic and acidic residues; the sequence is DRNKSQRLEGHDQVSDDYM.

The protein resides in the cell membrane. Its function is as follows. Potential calcium-dependent cell-adhesion protein. May be involved in the establishment and maintenance of specific neuronal connections in the brain. The protein is Protocadherin beta-1 (PCDHB1) of Homo sapiens (Human).